A 219-amino-acid chain; its full sequence is Small ribosomal subunit protein uS3c (219 aa).

Residues 47–118 (IRNHVRNSSN…KLRMTLVEVL (72 aa)) enclose the KH type-2 domain.

This sequence belongs to the universal ribosomal protein uS3 family. Part of the 30S ribosomal subunit.

Its subcellular location is the plastid. It is found in the chloroplast. This chain is Small ribosomal subunit protein uS3c (rps3), found in Chara vulgaris (Common stonewort).